Reading from the N-terminus, the 167-residue chain is Biogenesis of lysosome-related organelles complex 1 subunit 6 (167 aa).

The span at 1-11 shows a compositional bias: polar residues; sequence MLKSSNINSVL. The interval 1–38 is disordered; it reads MLKSSNINSVLNELPNDPARDSTAQSSHNGKPKQDAET. Positions 102-160 form a coiled coil; it reads ARLNDMMSDVKRYKDKLTKIKKEMQGVYQRTKELKKRAANVAACKQRDYQRKLERLQHE.

This sequence belongs to the BLOC1S6 family. As to quaternary structure, component of the biogenesis of lysosome-related organelles complex-1 (BLOC-1) composed of Blos1, Blos2, Blos3, Blos4, Dysb, Muted, Pldn and Snapin. Interacts with Blos1, Blos4 and Dysb.

The protein resides in the synapse. The protein localises to the cytoplasm. Its subcellular location is the cytoskeleton. It is found in the myofibril. It localises to the sarcomere. The protein resides in the z line. Functionally, component of the biogenesis of lysosome-related organelles complex-1 (BLOC-1) involved in pigment granule biogenesis and membrane trafficking in synapses. In response to high synaptic activity at neuromuscular junctions, plays a key role in promoting efficient synaptic vesicle recycling and re-formation through early endosomes. The protein is Biogenesis of lysosome-related organelles complex 1 subunit 6 of Drosophila melanogaster (Fruit fly).